A 397-amino-acid chain; its full sequence is Lysophospholipid transporter LplT (397 aa).

Topologically, residues 1-17 (MSESVHTNTSLWSKGMK) are periplasmic. Residues 18 to 38 (AVIVAQFLSAFGDNALLFATL) form a helical membrane-spanning segment. The Cytoplasmic segment spans residues 39 to 52 (ALLKAQFYPEWSQP). Residues 53–73 (ILQMVFVGAYILFAPFVGQVA) form a helical membrane-spanning segment. Over 74–90 (DSFAKGRVMMFANGLKL) the chain is Periplasmic. The helical transmembrane segment at 91–111 (LGAASICFGINPFLGYTLVGV) threads the bilayer. Residues 112-144 (GAAAYSPAKYGILGELTTGSKLVKANGLMEAST) are Cytoplasmic-facing. Residues 145–165 (IAAILLGSVAGGVLADWHVLV) form a helical membrane-spanning segment. Position 166 (alanine 166) is a topological domain, periplasmic. A helical transmembrane segment spans residues 167–187 (LAACALAYGGAVVANIYIPKL). Residues 188 to 226 (AAARPGQSWNLINMTRSFLNACTSLWRNGETRFSLVGTS) lie on the Cytoplasmic side of the membrane. A helical membrane pass occupies residues 227 to 247 (LFWGAGVTLRFLLVLWVPVAL). Topologically, residues 248–256 (GITDNATPT) are periplasmic. The chain crosses the membrane as a helical span at residues 257-277 (YLNAMVAIGIVVGAGAAAKLV). At 278–280 (TLE) the chain is on the cytoplasmic side. Residues 281–301 (TVSRCMPAGILIGVVVLIFSL) traverse the membrane as a helical segment. At 302–304 (QHE) the chain is on the periplasmic side. The helical transmembrane segment at 305-325 (LLPAYALLMLIGVMGGFFVVP) threads the bilayer. Topologically, residues 326-343 (LNALLQERGKKSVGAGNA) are cytoplasmic. Residues 344 to 364 (IAVQNLGENSAMLLMLGIYSL) form a helical membrane-spanning segment. The Periplasmic segment spans residues 365-366 (AV). Residues 367-387 (MIGIPVVPIGIGFGALFALAI) form a helical membrane-spanning segment. Residues 388–397 (TALWIWQRRH) lie on the Cytoplasmic side of the membrane.

This sequence belongs to the major facilitator superfamily. LplT (TC 2.A.1.42) family.

The protein resides in the cell inner membrane. Catalyzes the facilitated diffusion of 2-acyl-glycero-3-phosphoethanolamine (2-acyl-GPE) into the cell. This is Lysophospholipid transporter LplT from Escherichia coli O8 (strain IAI1).